Here is a 403-residue protein sequence, read N- to C-terminus: Argininosuccinate synthase (403 aa).

ATP contacts are provided by residues 10-18 and Ala37; that span reads AYSGGLDTS. Residues Tyr88 and Ser93 each contribute to the L-citrulline site. Residue Gly118 participates in ATP binding. Positions 120, 124, and 125 each coordinate L-aspartate. An L-citrulline-binding site is contributed by Asn124. Residues Arg128, Ser178, Ser187, Glu263, and Tyr275 each coordinate L-citrulline.

It belongs to the argininosuccinate synthase family. Type 1 subfamily. In terms of assembly, homotetramer.

Its subcellular location is the cytoplasm. It carries out the reaction L-citrulline + L-aspartate + ATP = 2-(N(omega)-L-arginino)succinate + AMP + diphosphate + H(+). The protein operates within amino-acid biosynthesis; L-arginine biosynthesis; L-arginine from L-ornithine and carbamoyl phosphate: step 2/3. In Marinobacter nauticus (strain ATCC 700491 / DSM 11845 / VT8) (Marinobacter aquaeolei), this protein is Argininosuccinate synthase.